A 977-amino-acid chain; its full sequence is RNA-binding protein 15 (977 aa).

4 stretches are compositionally biased toward basic and acidic residues: residues 1–10 (MRTAGRDPVP), 35–52 (RGDD…ERSP), 59–72 (RGGE…ERSK), and 98–113 (LHLD…REYD). Residues 1-167 (MRTAGRDPVP…SSAPGGGDGA (167 aa)) form a disordered region. Serine 109 carries the post-translational modification Phosphoserine. The span at 119–130 (SSSRLHSYSSPS) shows a compositional bias: low complexity. Gly residues predominate over residues 135–150 (SGGGESRSSSRGGGGE). Residues 151-160 (SRSSGAASSA) are compositionally biased toward low complexity. The 83-residue stretch at 170-252 (KTLKISELGS…RPLKIEAVYV (83 aa)) folds into the RRM 1 domain. Serine 179, serine 208, and serine 210 each carry phosphoserine. Lysine 246 is covalently cross-linked (Glycyl lysine isopeptide (Lys-Gly) (interchain with G-Cter in SUMO2)). A phosphoserine mark is found at serine 253, serine 257, and serine 259. Residues 256–298 (RSRSPLDKDTYPPSASVVGASVGGHRHPPGGGGGQRSLSPGGA) form a disordered region. At tyrosine 266 the chain carries Phosphotyrosine. 3 positions are modified to phosphoserine: serine 292, serine 294, and serine 365. RRM domains follow at residues 374–451 (RTLF…YGKA) and 455–529 (TRLW…FADT). Residues lysine 406, lysine 420, and lysine 445 each participate in a glycyl lysine isopeptide (Lys-Gly) (interchain with G-Cter in SUMO2) cross-link. Lysine 450 carries the post-translational modification N6-acetyllysine. Composition is skewed to basic and acidic residues over residues 555 to 581 (HRAP…RDLY) and 613 to 661 (SLDR…ESDR). A disordered region spans residues 555 to 778 (HRAPDPLRGA…KQDGGTAPVA (224 aa)). Threonine 568 is modified (phosphothreonine). An Asymmetric dimethylarginine; alternate; by PRMT1 modification is found at arginine 578. Arginine 578 is modified (omega-N-methylarginine; alternate; by PRMT1). Serine 622, serine 656, serine 670, serine 674, serine 700, and serine 741 each carry phosphoserine. Composition is skewed to basic and acidic residues over residues 673–728 (RSPE…AERD) and 741–750 (SPLKKEDRSD). A Glycyl lysine isopeptide (Lys-Gly) (interchain with G-Cter in SUMO2) cross-link involves residue lysine 744. A compositionally biased stretch (polar residues) spans 752-771 (SAPSTSTASSKLKSPSQKQD). Residues serine 765, serine 767, and serine 781 each carry the phosphoserine modification. Positions 777–956 (VASASPKLCL…YLVMIIVRGF (180 aa)) constitute an SPOC domain. Residues 865–884 (GSSDSRSSSSSAASDTATST) form a disordered region. The span at 866 to 884 (SSDSRSSSSSAASDTATST) shows a compositional bias: low complexity. A Phosphoserine modification is found at serine 935.

The protein belongs to the RRM Spen family. Component of the WMM complex, a N6-methyltransferase complex composed of a catalytic subcomplex, named MAC, and of an associated subcomplex, named MACOM. The MAC subcomplex is composed of METTL3 and METTL14. The MACOM subcomplex is composed of WTAP, ZC3H13, CBLL1/HAKAI, VIRMA, and, in some cases of RBM15 (RBM15 or RBM15B). Also a component of a MACOM-like complex, named WTAP complex, composed of WTAP, ZC3H13, CBLL1, VIRMA, RBM15, BCLAF1 and THRAP3. Interacts with RBPJ. Interacts (via SPOC domain) with SETD1B. Interacts with NXF1, the interaction is required to promote mRNA export. Interacts with SF3B1. In terms of assembly, (Microbial infection) Interacts with Epstein-Barr virus BSFL2/BMLF1. In terms of processing, methylated at Arg-578 by PRMT1, leading to promote ubiquitination by CNOT4 and subsequent degradation by the proteasome. Post-translationally, ubiquitinated by CNOT4 following methylation at Arg-578 by PRMT1.

The protein resides in the nucleus speckle. It localises to the nucleus. The protein localises to the nucleoplasm. Its subcellular location is the nucleus envelope. It is found in the nucleus membrane. In terms of biological role, RNA-binding protein that acts as a key regulator of N6-methyladenosine (m6A) methylation of RNAs, thereby regulating different processes, such as hematopoietic cell homeostasis, alternative splicing of mRNAs and X chromosome inactivation mediated by Xist RNA. Associated component of the WMM complex, a complex that mediates N6-methyladenosine (m6A) methylation of RNAs, a modification that plays a role in the efficiency of mRNA splicing and RNA processing. Plays a key role in m6A methylation, possibly by binding target RNAs and recruiting the WMM complex. Involved in random X inactivation mediated by Xist RNA: acts by binding Xist RNA and recruiting the WMM complex, which mediates m6A methylation, leading to target YTHDC1 reader on Xist RNA and promoting transcription repression activity of Xist. Required for the development of multiple tissues, such as the maintenance of the homeostasis of long-term hematopoietic stem cells and for megakaryocyte (MK) and B-cell differentiation. Regulates megakaryocyte differentiation by regulating alternative splicing of genes important for megakaryocyte differentiation; probably regulates alternative splicing via m6A regulation. Required for placental vascular branching morphogenesis and embryonic development of the heart and spleen. Acts as a regulator of thrombopoietin response in hematopoietic stem cells by regulating alternative splicing of MPL. May also function as an mRNA export factor, stimulating export and expression of RTE-containing mRNAs which are present in many retrotransposons that require to be exported prior to splicing. High affinity binding of pre-mRNA to RBM15 may allow targeting of the mRNP to the export helicase DBP5 in a manner that is independent of splicing-mediated NXF1 deposition, resulting in export prior to splicing. May be implicated in HOX gene regulation. This is RNA-binding protein 15 from Homo sapiens (Human).